The primary structure comprises 194 residues: Troponin I 4 (194 aa).

Positions methionine 1–glutamate 27 are disordered. The span at aspartate 7–glutamate 27 shows a compositional bias: basic and acidic residues.

Belongs to the troponin I family. Expression is detected only in pharyngeal muscle cells from embryos to adults.

Functionally, troponin I is the inhibitory subunit of troponin, the thin filament regulatory complex which confers calcium-sensitivity to muscle actomyosin ATPase activity. This chain is Troponin I 4 (tni-4), found in Caenorhabditis elegans.